The sequence spans 722 residues: Pentatricopeptide repeat-containing protein At4g14820 (722 aa).

PPR repeat units follow at residues 75–109 (ESIVFNPFLRDLSRSSEPRATILFYQRIRHVGGRL), 110–140 (DQFSFLPILKAVSKVSALFEGMELHGVAFKI), 145–175 (DPFVETGFMDMYASCGRINYARNVFDEMSHR), 176–210 (DVVTWNTMIERYCRFGLVDEAFKLFEEMKDSNVMP), 211–245 (DEMILCNIVSACGRTGNMRYNRAIYEFLIENDVRM), 246–276 (DTHLLTALVTMYAGAGCMDMAREFFRKMSVR), 277–307 (NLFVSTAMVSGYSKCGRLDDAQVIFDQTEKK), 308–342 (DLVCWTTMISAYVESDYPQEALRVFEEMCCSGIKP), 343–377 (DVVSMFSVISACANLGILDKAKWVHSCIHVNGLES), 378–408 (ELSINNALINMYAKCGGLDATRDVFEKMPRR), 409–443 (NVVSWSSMINALSMHGEASDALSLFARMKQENVEP), 444–479 (NEVTFVGVLYGCSHSGLVEEGKKIFASMTDEYNITP), and 480–514 (KLEHYGCMVDLFGRANLLREALEVIESMPVASNVV). Positions 515-590 (IWGSLMSACR…EKGLSRIDQN (76 aa)) are type E motif. The segment at 591 to 621 (GKSHEFLIGDKRHKQSNEIYAKLDEVVSKLK) is type E(+) motif. The segment at 622-722 (LAGYVPDCGS…NGLCSCRDYW (101 aa)) is type DYW motif.

It belongs to the PPR family. PCMP-H subfamily.

The protein is Pentatricopeptide repeat-containing protein At4g14820 (PCMP-H3) of Arabidopsis thaliana (Mouse-ear cress).